A 492-amino-acid chain; its full sequence is Sestrin-1 (492 aa).

The interval 71-252 is N-terminal domain; may mediate the alkylhydroperoxide reductase activity; that stretch reads FADSFAALGR…ICDITNGNHS (182 aa). The Cysteine sulfenic acid (-SOH) intermediate role is filled by Cys130. A phosphoserine mark is found at Ser293 and Ser314. Positions 321–492 are C-terminal domain; mediates TORC1 regulation; the sequence is PARDVSRHFE…ALRAITRYMT (172 aa). Residues 386 to 389, Thr398, and Glu463 each bind L-leucine; that span reads TYNT.

This sequence belongs to the sestrin family. As to quaternary structure, interacts with the GATOR2 complex which is composed of MIOS, SEC13, SEH1L, WDR24 and WDR59; the interaction is negatively regulated by leucine. Interacts with RRAGA, RRAGB, RRAGC and RRAGD; may function as a guanine nucleotide dissociation inhibitor for RRAGs and regulate them. Interacts with KEAP1, RBX1 and SQSTM1; in the SQSTM1-dependent autophagic degradation of KEAP1. May interact with PRDX1. Highly expressed in heart and also detected in liver and skeletal muscles (at protein level).

The protein resides in the nucleus. Its subcellular location is the cytoplasm. It catalyses the reaction a hydroperoxide + L-cysteinyl-[protein] = S-hydroxy-L-cysteinyl-[protein] + an alcohol. Its function is as follows. Functions as an intracellular leucine sensor that negatively regulates the TORC1 signaling pathway through the GATOR complex. In absence of leucine, binds the GATOR subcomplex GATOR2 and prevents TORC1 signaling. Binding of leucine to SESN2 disrupts its interaction with GATOR2 thereby activating the TORC1 signaling pathway. This stress-inducible metabolic regulator may also play a role in protection against oxidative and genotoxic stresses. May positively regulate the transcription by NFE2L2 of genes involved in the response to oxidative stress by facilitating the SQSTM1-mediated autophagic degradation of KEAP1. Moreover, may prevent the accumulation of reactive oxygen species (ROS) through the alkylhydroperoxide reductase activity born by the N-terminal domain of the protein. Was originally reported to contribute to oxidative stress resistance by reducing PRDX1. However, this could not be confirmed. The sequence is that of Sestrin-1 from Mus musculus (Mouse).